The chain runs to 152 residues: MKFIILALCVAAASALSGDQIGLVQSTYGKVKGDSVGILYAVFKADPTIQAAFPQFVGKDLDAIKGGAEFSTHAGRIVGFLGGVIDDLPNIGKHVDALVATHKPRGVTHAQFNNFRAAFIAYLKGHVDYTAAVEAAWGATFDAFFGAVFAKM.

The first 15 residues, M1–A15, serve as a signal peptide directing secretion. In terms of domain architecture, Globin spans L16 to M152. Heme b-binding residues include H73 and H102.

Belongs to the globin family.

The sequence is that of Globin CTT-E/E' (CTT-E) from Chironomus thummi thummi (Midge).